A 98-amino-acid polypeptide reads, in one-letter code: MANVNIKPLEDRVLVQISEAETTTASGLVIPDSAKEKPQEGVVVAAGPGRFDGDDRVPMDIKEGDTVVFSKYGGTELKYNGEEYLLLNARDVLAIIEK.

The protein belongs to the GroES chaperonin family. As to quaternary structure, heptamer of 7 subunits arranged in a ring. Interacts with the chaperonin GroEL.

Its subcellular location is the cytoplasm. In terms of biological role, together with the chaperonin GroEL, plays an essential role in assisting protein folding. The GroEL-GroES system forms a nano-cage that allows encapsulation of the non-native substrate proteins and provides a physical environment optimized to promote and accelerate protein folding. GroES binds to the apical surface of the GroEL ring, thereby capping the opening of the GroEL channel. This is Co-chaperonin GroES from Corynebacterium diphtheriae (strain ATCC 700971 / NCTC 13129 / Biotype gravis).